We begin with the raw amino-acid sequence, 753 residues long: Probable tubulin--tyrosine ligase PBY1 (753 aa).

In terms of domain architecture, TTL spans 343–734; that stretch reads MEYIYKPLTH…PIFNENRNKT (392 aa).

It belongs to the tubulin--tyrosine ligase family. Mg(2+) serves as cofactor. K(+) is required as a cofactor.

It localises to the cytoplasm. Its subcellular location is the P-body. The catalysed reaction is C-terminal L-alpha-aminoacyl-L-glutamyl-L-glutamyl-[tubulin] + L-tyrosine + ATP = C-terminal L-alpha-aminoacyl-L-glutamyl-L-glutamyl-L-tyrosyl-[tubulin] + ADP + phosphate + H(+). Probable P-body-associated tubulin--tyrosine ligase. In Saccharomyces cerevisiae (strain ATCC 204508 / S288c) (Baker's yeast), this protein is Probable tubulin--tyrosine ligase PBY1 (PBY1).